The following is a 100-amino-acid chain: Urease subunit gamma (100 aa).

It belongs to the urease gamma subunit family. As to quaternary structure, heterotrimer of UreA (gamma), UreB (beta) and UreC (alpha) subunits. Three heterotrimers associate to form the active enzyme.

The protein resides in the cytoplasm. The enzyme catalyses urea + 2 H2O + H(+) = hydrogencarbonate + 2 NH4(+). It participates in nitrogen metabolism; urea degradation; CO(2) and NH(3) from urea (urease route): step 1/1. The protein is Urease subunit gamma of Verminephrobacter eiseniae (strain EF01-2).